Here is a 299-residue protein sequence, read N- to C-terminus: Ribosomal RNA small subunit methyltransferase H (299 aa).

S-adenosyl-L-methionine-binding positions include 36–38 (GGH), Asp-55, Phe-82, Asp-97, and Gln-104.

Belongs to the methyltransferase superfamily. RsmH family.

Its subcellular location is the cytoplasm. It carries out the reaction cytidine(1402) in 16S rRNA + S-adenosyl-L-methionine = N(4)-methylcytidine(1402) in 16S rRNA + S-adenosyl-L-homocysteine + H(+). Functionally, specifically methylates the N4 position of cytidine in position 1402 (C1402) of 16S rRNA. The sequence is that of Ribosomal RNA small subunit methyltransferase H from Synechococcus sp. (strain RCC307).